The primary structure comprises 236 residues: 2-C-methyl-D-erythritol 4-phosphate cytidylyltransferase (236 aa).

It belongs to the IspD/TarI cytidylyltransferase family. IspD subfamily.

It catalyses the reaction 2-C-methyl-D-erythritol 4-phosphate + CTP + H(+) = 4-CDP-2-C-methyl-D-erythritol + diphosphate. Its pathway is isoprenoid biosynthesis; isopentenyl diphosphate biosynthesis via DXP pathway; isopentenyl diphosphate from 1-deoxy-D-xylulose 5-phosphate: step 2/6. In terms of biological role, catalyzes the formation of 4-diphosphocytidyl-2-C-methyl-D-erythritol from CTP and 2-C-methyl-D-erythritol 4-phosphate (MEP). In Burkholderia multivorans (strain ATCC 17616 / 249), this protein is 2-C-methyl-D-erythritol 4-phosphate cytidylyltransferase.